Consider the following 2192-residue polypeptide: Non-reducing polyketide synthase 1 (2192 aa).

An N-terminal acylcarrier protein transacylase domain (SAT) region spans residues 5 to 243 (LLLGDQTADQ…VSIPIYAPYH (239 aa)). In terms of domain architecture, Ketosynthase family 3 (KS3) spans 374 to 806 (NDKIAIVGMS…GGNTSLLLED (433 aa)). Active-site for beta-ketoacyl synthase activity residues include Cys546, His681, and His724. The interval 905 to 1218 (FCFTGQGSQY…ANSMCALFLA (314 aa)) is malonyl-CoA:ACP transacylase (MAT) domain. The For acyl/malonyl transferase activity role is filled by Ser993. Residues 1293–1610 (SCQKIIDEEF…RKVLNTFLPP (318 aa)) form a product template (PT) domain region. The interval 1295–1430 (QKIIDEEFSA…CTVKFEDINT (136 aa)) is N-terminal hotdog fold. The 311-residue stretch at 1295 to 1605 (QKIIDEEFSA…FQKIPRKVLN (311 aa)) folds into the PKS/mFAS DH domain. His1327 (proton acceptor; for dehydratase activity) is an active-site residue. A C-terminal hotdog fold region spans residues 1458 to 1605 (AHVIGRGLAY…FQKIPRKVLN (148 aa)). Asp1518 acts as the Proton donor; for dehydratase activity in catalysis. Residues 1639-1668 (TQAQPAKAVPKQVTVAAPTPKAAPKKADLK) are disordered. The 78-residue stretch at 1670–1747 (PAGPTIITRV…EMKKFFSQYD (78 aa)) folds into the Carrier 1 domain. Ser1707 carries the post-translational modification O-(pantetheine 4'-phosphoryl)serine. A disordered region spans residues 1748-1788 (GEVGTPEQDDSDSDSETSGDASTPMSEVGTPMTIPSSAVSE). Residues 1754–1764 (EQDDSDSDSET) are compositionally biased toward acidic residues. In terms of domain architecture, Carrier 2 spans 1798–1875 (APASGEVSIA…DVENALDMRP (78 aa)). Ser1835 is modified (O-(pantetheine 4'-phosphoryl)serine). The tract at residues 1913–2164 (SKYPAATSVL…SMMKPPHVSI (252 aa)) is thioesterase (TE) domain.

Its function is as follows. Non-reducing polyketide synthase; part of the gene cluster that mediates the biosynthesis of elsinochromes, pigments consisting of at least four interconvertible tautomers (A, B, C and D) that have a core phenolic quinone to which various side chains are attached and which play an important role in fungal pathogenesis. The non-reducing polyketide synthase PKS1 was proposed to iteratively catalyze decarboxylation between acetyl-CoA and malonyl-CoA subunits for polyketide chain elongation. The released polyketide undergoes cyclization to form an aromatic ring, and proceeds via serial modification steps to produce the heptaketide back- bone of elsinochrome. As elsinochrome has a symmetrical structure, two identical heptaketides are fused to form a core 1,2-dihydrobenzo-perylene ring structure, which can then be successively modified to produce the various derivatives of elsinochrome. Some of these reactions may be cooperatively carried out, at least in part, by the products of RDT1, OXR1 and PKS1. PRF1, embedded within the elsinochrome cluster possibly functions to stabilize some of the biosynthetic enzymes required for elsinochrome production. As prefoldin is a hexamer containing 2 a and 4 b subunits, additional prefoldin subunits, whose coding genes may not immediately link to the elsinochrome biosynthetic gene cluster, are required to fulfill the chaperone function. In addition, no methyltransferase-coding gene exists within the biosynthetic gene cluster, even though elsinochrome has four methyl groups at positions C3, C7, C8 and C12. Apparently, the identified gene cluster does not contain the entire entourage of genes responsible for elsinochrome biosynthesis. Once elsinochrome is synthesized, it must be exported outside the fungal cells, which is probably accomplished by the ECT1 transporter, to avoid toxicity. This is Non-reducing polyketide synthase 1 from Elsinoe fawcettii (Citrus scab fungus).